We begin with the raw amino-acid sequence, 543 residues long: Probable protein kinase UbiB (543 aa).

The Protein kinase domain maps to 123–501 (DFDSQALASA…QQRQGQSRYL (379 aa)). ATP contacts are provided by residues 129–137 (LASASIAQV) and Lys152. Asp287 functions as the Proton acceptor in the catalytic mechanism. Residues 517–539 (LADATEVSTGFIVAGALAWFIGW) form a helical membrane-spanning segment.

This sequence belongs to the ABC1 family. UbiB subfamily.

It is found in the cell inner membrane. The protein operates within cofactor biosynthesis; ubiquinone biosynthesis [regulation]. Is probably a protein kinase regulator of UbiI activity which is involved in aerobic coenzyme Q (ubiquinone) biosynthesis. The protein is Probable protein kinase UbiB of Yersinia pseudotuberculosis serotype O:1b (strain IP 31758).